We begin with the raw amino-acid sequence, 268 residues long: Calpain small subunit 1 (268 aa).

Methionine 1 bears the N-acetylmethionine mark. Serine 6 bears the Phosphoserine mark. Positions 96–130 (EEVRQFRKLFVQLAGDDMEVSATELMNILNKVVTR) constitute an EF-hand 1; atypical domain. Residues alanine 109, aspartate 112, glutamate 114, glutamate 119, aspartate 137, aspartate 152, aspartate 154, threonine 156, lysine 158, and glutamate 163 each contribute to the Ca(2+) site. EF-hand domains lie at 139 to 172 (FGID…NNIK), 169 to 204 (NNIK…AGFH), 205 to 233 (LNEH…ISCL), and 234 to 268 (VRLD…TMYS). Lysine 179 is subject to N6-acetyllysine. Aspartate 182, aspartate 184, serine 186, threonine 188, glutamate 193, and aspartate 225 together coordinate Ca(2+).

In terms of assembly, homodimer or heterodimer of a large (catalytic) and a small (regulatory) subunit. In presence of calcium, the heterodimer dissociates.

It is found in the cytoplasm. It localises to the cell membrane. Regulatory subunit of the calcium-regulated non-lysosomal thiol-protease which catalyzes limited proteolysis of substrates involved in cytoskeletal remodeling and signal transduction. Essential for embryonic development. The polypeptide is Calpain small subunit 1 (Capns1) (Mus musculus (Mouse)).